Consider the following 302-residue polypeptide: Sulfate adenylyltransferase subunit 2 (302 aa).

The protein belongs to the PAPS reductase family. CysD subfamily. In terms of assembly, heterodimer composed of CysD, the smaller subunit, and CysN.

It carries out the reaction sulfate + ATP + H(+) = adenosine 5'-phosphosulfate + diphosphate. Its pathway is sulfur metabolism; hydrogen sulfide biosynthesis; sulfite from sulfate: step 1/3. Its function is as follows. With CysN forms the ATP sulfurylase (ATPS) that catalyzes the adenylation of sulfate producing adenosine 5'-phosphosulfate (APS) and diphosphate, the first enzymatic step in sulfur assimilation pathway. APS synthesis involves the formation of a high-energy phosphoric-sulfuric acid anhydride bond driven by GTP hydrolysis by CysN coupled to ATP hydrolysis by CysD. The sequence is that of Sulfate adenylyltransferase subunit 2 from Escherichia coli O9:H4 (strain HS).